The sequence spans 79 residues: MAEAGARRPFFRRRKTCPFTGTNAPKIDYKDSKLLMRYVSERGKIVPSRITAVSAKKQRELARAIKRARFLGLLPYVIR.

Belongs to the bacterial ribosomal protein bS18 family. Part of the 30S ribosomal subunit. Forms a tight heterodimer with protein bS6.

In terms of biological role, binds as a heterodimer with protein bS6 to the central domain of the 16S rRNA, where it helps stabilize the platform of the 30S subunit. The sequence is that of Small ribosomal subunit protein bS18 from Rhodopseudomonas palustris (strain BisB5).